The sequence spans 171 residues: Histone H1, gonadal (171 aa).

Disordered stretches follow at residues 1–40 (AASP…AHPP) and 133–171 (AKAK…KAKP). Over residues 9-35 (ASPRKSPKKSPRKSPKKKSPRKRKARS) the composition is skewed to basic residues. Positions 37-111 (AHPPVIDMIT…GATGRFRVGA (75 aa)) constitute an H15 domain.

It belongs to the histone H1/H5 family. As to expression, sperm.

It is found in the nucleus. The protein resides in the chromosome. Histones H1 are necessary for the condensation of nucleosome chains into higher-order structures. In Echinolampas crassa (Sea urchin), this protein is Histone H1, gonadal.